Here is a 495-residue protein sequence, read N- to C-terminus: Probable cytosol aminopeptidase (495 aa).

Residues Lys-261 and Asp-266 each contribute to the Mn(2+) site. Lys-273 is an active-site residue. Asp-284, Asp-343, and Glu-345 together coordinate Mn(2+). The active site involves Arg-347.

This sequence belongs to the peptidase M17 family. Mn(2+) serves as cofactor.

It localises to the cytoplasm. It carries out the reaction Release of an N-terminal amino acid, Xaa-|-Yaa-, in which Xaa is preferably Leu, but may be other amino acids including Pro although not Arg or Lys, and Yaa may be Pro. Amino acid amides and methyl esters are also readily hydrolyzed, but rates on arylamides are exceedingly low.. The catalysed reaction is Release of an N-terminal amino acid, preferentially leucine, but not glutamic or aspartic acids.. Presumably involved in the processing and regular turnover of intracellular proteins. Catalyzes the removal of unsubstituted N-terminal amino acids from various peptides. This Chelativorans sp. (strain BNC1) protein is Probable cytosol aminopeptidase.